We begin with the raw amino-acid sequence, 272 residues long: Putative esterase/lipase 3 (272 aa).

His-34 is a catalytic residue. Catalysis depends on Ser-100, which acts as the Charge relay system.

Belongs to the lipase/esterase LIP3/BchO family.

The protein is Putative esterase/lipase 3 of Mycoplasma pneumoniae (strain ATCC 29342 / M129 / Subtype 1) (Mycoplasmoides pneumoniae).